We begin with the raw amino-acid sequence, 321 residues long: Methionine import ATP-binding protein MetN (321 aa).

The region spanning isoleucine 2 to glycine 237 is the ABC transporter domain. Residue glycine 34–serine 41 coordinates ATP.

The protein belongs to the ABC transporter superfamily. Methionine importer (TC 3.A.1.24) family. As to quaternary structure, the complex is composed of two ATP-binding proteins (MetN), two transmembrane proteins (MetI) and a solute-binding protein (MetQ).

Its subcellular location is the cell membrane. It carries out the reaction L-methionine(out) + ATP + H2O = L-methionine(in) + ADP + phosphate + H(+). It catalyses the reaction D-methionine(out) + ATP + H2O = D-methionine(in) + ADP + phosphate + H(+). Functionally, part of the ABC transporter complex MetNIQ involved in methionine import. Responsible for energy coupling to the transport system. This Clostridioides difficile (strain 630) (Peptoclostridium difficile) protein is Methionine import ATP-binding protein MetN.